We begin with the raw amino-acid sequence, 573 residues long: E3 ubiquitin-protein ligase RNF168 (573 aa).

An RING-type zinc finger spans residues 16 to 55 (CQICVEILFEPVTLPCNHTLCKPCFESTVEKASLCCPFCR). The residue at position 70 (S70) is a Phosphoserine. Positions 110–128 (LSKPGELRREYEEEISKVE) match the LR motif 1 motif. The UMI motif motif lies at 143–151 (EEYIQKLLA). Disordered stretches follow at residues 153–174 (EEEE…QLKS) and 196–277 (ASPL…EDMP). Positions 157–174 (EKRQAEKRHREMEEQLKS) are enriched in basic and acidic residues. The short motif at 168 to 191 (MEEQLKSDEELARRLSLDINNFCE) is the MIU motif 1 element. At S197 the chain carries Phosphoserine. Residue K210 forms a Glycyl lysine isopeptide (Lys-Gly) (interchain with G-Cter in SUMO2) linkage. The segment covering 231-243 (PKSQLGSASQSEV) has biased composition (polar residues). The span at 245-261 (QEDRKSSMSKKIDDNSD) shows a compositional bias: basic and acidic residues. Position 363 is a phosphothreonine (T363). At S416 the chain carries Phosphoserine. The MIU motif 2 signature appears at 440–463 (RHKQEKQDRLLALQLQEEVDQEQM). The tract at residues 456-528 (EEVDQEQMRP…NHQQPSFKIQ (73 aa)) is disordered. Over residues 461-470 (EQMRPDRQKG) the composition is skewed to basic and acidic residues. The LR motif 2 signature appears at 467–478 (RQKGSPDGYQLR). The residue at position 471 (S471) is a Phosphoserine. A compositionally biased stretch (basic and acidic residues) spans 494 to 519 (NSRDRNSKRQTELEQPKPRTDSKNEN). K530 participates in a covalent cross-link: Glycyl lysine isopeptide (Lys-Gly) (interchain with G-Cter in SUMO2). The tract at residues 540–573 (NSTNDNCNVSKTAHSLQPSKSQKSIFQMFQRVTK) is disordered.

It belongs to the RNF168 family. As to quaternary structure, monomer. Interacts with UBE2N/UBC13. Post-translationally, sumoylated with SUMO1 by PIAS4 in response to double-strand breaks (DSBs). In terms of processing, ubiquitinated.

The protein resides in the nucleus. It carries out the reaction S-ubiquitinyl-[E2 ubiquitin-conjugating enzyme]-L-cysteine + [acceptor protein]-L-lysine = [E2 ubiquitin-conjugating enzyme]-L-cysteine + N(6)-ubiquitinyl-[acceptor protein]-L-lysine.. The protein operates within protein modification; protein ubiquitination. E3 ubiquitin-protein ligase required for accumulation of repair proteins to sites of DNA damage. Acts with UBE2N/UBC13 to amplify the RNF8-dependent histone ubiquitination. Recruited to sites of DNA damage at double-strand breaks (DSBs) by binding to ubiquitinated histone H2A and H2AX and amplifies the RNF8-dependent H2A ubiquitination, promoting the formation of 'Lys-63'-linked ubiquitin conjugates. This leads to concentrate ubiquitinated histones H2A and H2AX at DNA lesions to the threshold required for recruitment of TP53BP1 and BRCA1. Also recruited at DNA interstrand cross-links (ICLs) sites and promotes accumulation of 'Lys-63'-linked ubiquitination of histones H2A and H2AX, leading to recruitment of FAAP20 and Fanconi anemia (FA) complex, followed by interstrand cross-link repair. H2A ubiquitination also mediates the ATM-dependent transcriptional silencing at regions flanking DSBs in cis, a mechanism to avoid collision between transcription and repair intermediates. Also involved in class switch recombination in immune system, via its role in regulation of DSBs repair. Following DNA damage, promotes the ubiquitination and degradation of JMJD2A/KDM4A in collaboration with RNF8, leading to unmask H4K20me2 mark and promote the recruitment of TP53BP1 at DNA damage sites. Not able to initiate 'Lys-63'-linked ubiquitination in vitro; possibly due to partial occlusion of the UBE2N/UBC13-binding region. Catalyzes monoubiquitination of 'Lys-13' and 'Lys-15' of nucleosomal histone H2A (H2AK13Ub and H2AK15Ub, respectively). The protein is E3 ubiquitin-protein ligase RNF168 of Bos taurus (Bovine).